A 244-amino-acid chain; its full sequence is Cobalt transport protein CbiM (244 aa).

The N-terminal stretch at 1 to 27 is a signal peptide; sequence MVEGMLKTNFRLLFLLIFLLIPTPVLA. The next 6 membrane-spanning stretches (helical) occupy residues 36–56, 65–85, 102–122, 134–154, 168–188, and 196–216; these read PVKWVIFWDLVTLPFIMVGFI, GPGAKLMLAFAGAFIFVLSAL, LAAILFGPFITTVLGFIVLIF, TLGANTFSMAVAGPLVAYGVY, IFLAAMLGDLVTYIVTSVQLA, and LFLSALKFMGIFALTQIPLAI.

This sequence belongs to the CbiM family. As to quaternary structure, forms an energy-coupling factor (ECF) transporter complex composed of an ATP-binding protein (A component, CbiO), a transmembrane protein (T component, CbiQ) and 2 possible substrate-capture proteins (S components, CbiM and CbiN) of unknown stoichimetry.

It is found in the cell membrane. It participates in cofactor biosynthesis; adenosylcobalamin biosynthesis. Part of the energy-coupling factor (ECF) transporter complex CbiMNOQ involved in cobalt import. The sequence is that of Cobalt transport protein CbiM from Carboxydothermus hydrogenoformans (strain ATCC BAA-161 / DSM 6008 / Z-2901).